Reading from the N-terminus, the 330-residue chain is Succinylglutamate desuccinylase (330 aa).

Zn(2+)-binding residues include histidine 53, glutamate 56, and histidine 147. Glutamate 210 is a catalytic residue.

Belongs to the AspA/AstE family. Succinylglutamate desuccinylase subfamily. It depends on Zn(2+) as a cofactor.

It catalyses the reaction N-succinyl-L-glutamate + H2O = L-glutamate + succinate. Its pathway is amino-acid degradation; L-arginine degradation via AST pathway; L-glutamate and succinate from L-arginine: step 5/5. In terms of biological role, transforms N(2)-succinylglutamate into succinate and glutamate. The protein is Succinylglutamate desuccinylase of Yersinia pseudotuberculosis serotype O:1b (strain IP 31758).